The following is a 224-amino-acid chain: Glycerol-3-phosphate acyltransferase (224 aa).

6 consecutive transmembrane segments (helical) span residues 3–23 (IFLS…IGSL), 54–74 (VFGY…VVFA), 90–112 (LYFY…PIYF), 127–147 (LISI…LLLF), 152–172 (VSLS…IPWM), and 183–203 (GFGQ…LIFW).

It belongs to the PlsY family. As to quaternary structure, probably interacts with PlsX.

The protein resides in the cell membrane. The enzyme catalyses an acyl phosphate + sn-glycerol 3-phosphate = a 1-acyl-sn-glycero-3-phosphate + phosphate. It functions in the pathway lipid metabolism; phospholipid metabolism. In terms of biological role, catalyzes the transfer of an acyl group from acyl-phosphate (acyl-PO(4)) to glycerol-3-phosphate (G3P) to form lysophosphatidic acid (LPA). This enzyme utilizes acyl-phosphate as fatty acyl donor, but not acyl-CoA or acyl-ACP. In Mycoplasmopsis synoviae (strain 53) (Mycoplasma synoviae), this protein is Glycerol-3-phosphate acyltransferase.